We begin with the raw amino-acid sequence, 560 residues long: Putative ABC transporter ATP-binding protein SP_0483 (560 aa).

2 ABC transporter domains span residues 6-247 (IEWK…GIRE) and 297-528 (FRLE…ANLK). ATP is bound by residues 40 to 47 (GPSGSGKS) and 329 to 336 (GKNGAGKS).

This sequence belongs to the ABC transporter superfamily.

Its subcellular location is the cell membrane. Probably part of an ABC transporter complex. Responsible for energy coupling to the transport system. This Streptococcus pneumoniae serotype 4 (strain ATCC BAA-334 / TIGR4) protein is Putative ABC transporter ATP-binding protein SP_0483.